The chain runs to 331 residues: B-box zinc finger protein 21 (331 aa).

The Zn(2+) site is built by cysteine 5, cysteine 8, cysteine 28, histidine 34, cysteine 60, cysteine 63, cysteine 83, and histidine 93. The B box-type 1; atypical zinc finger occupies 5–47; that stretch reads CDVCDKEEASVFCTADEASLCGGCDHQVHHANKLASKHLRFSL. The B box-type 2; atypical zinc finger occupies 60–102; the sequence is CDICQDKKALLFCQQDRAILCKDCDSSIHAANEHTKKHDRFLL. 2 stretches are compositionally biased toward low complexity: residues 115–126 and 228–238; these read KPTSKSSSSSSS and NNNNNNNNNNN. Disordered regions lie at residues 115 to 167 and 209 to 241; these read KPTS…GGDA and DDDGVLPYMEPEDDNNTKRNNNNNNNNNNNTVS.

As to quaternary structure, interacts with COP1, HY5 and BBX32. Interacts with FLZ1.

Its subcellular location is the nucleus. In terms of biological role, transcription activator that acts as a positive regulator of seedling photomorphogenesis. Acts downstream of COP1 and play an important role in early and long-term adjustment of the shade avoidance syndrome (SAS) responses in natural environments. The protein is B-box zinc finger protein 21 of Arabidopsis thaliana (Mouse-ear cress).